The primary structure comprises 1481 residues: DNA-directed RNA polymerase subunit beta'' (1481 aa).

4 residues coordinate Zn(2+): C217, C291, C298, and C301.

It belongs to the RNA polymerase beta' chain family. RpoC2 subfamily. As to quaternary structure, in plastids the minimal PEP RNA polymerase catalytic core is composed of four subunits: alpha, beta, beta', and beta''. When a (nuclear-encoded) sigma factor is associated with the core the holoenzyme is formed, which can initiate transcription. It depends on Zn(2+) as a cofactor.

It is found in the plastid. The protein resides in the chloroplast. It carries out the reaction RNA(n) + a ribonucleoside 5'-triphosphate = RNA(n+1) + diphosphate. Its function is as follows. DNA-dependent RNA polymerase catalyzes the transcription of DNA into RNA using the four ribonucleoside triphosphates as substrates. The sequence is that of DNA-directed RNA polymerase subunit beta'' from Trieres chinensis (Marine centric diatom).